Here is a 136-residue protein sequence, read N- to C-terminus: Histone H3.1/H3.2 (136 aa).

The disordered stretch occupies residues 1–43 (MARTKQTARKSTGGKAPRKQLASKAARKSAPSTGGVKKPHRYK). K5 carries the post-translational modification N6,N6,N6-trimethyllysine; alternate. At K5 the chain carries N6,N6-dimethyllysine; alternate. An N6-methyllysine; alternate mark is found at K5 and K10. The residue at position 10 (K10) is an N6-acetyllysine; alternate. S11 carries the post-translational modification Phosphoserine. The residue at position 15 (K15) is an N6,N6-dimethyllysine; alternate. An N6-acetyllysine; alternate mark is found at K15, K19, K24, K28, and K37. K19, K24, K28, and K37 each carry N6-methyllysine; alternate. An N6,N6,N6-trimethyllysine; alternate mark is found at K28 and K37. K28 and K37 each carry N6,N6-dimethyllysine; alternate. N6-acetyllysine occurs at positions 57 and 65. An N6,N6,N6-trimethyllysine; alternate modification is found at K80. K80 carries the post-translational modification N6,N6-dimethyllysine; alternate. Position 80 is an N6-methyllysine; alternate (K80).

It belongs to the histone H3 family. In terms of assembly, the nucleosome is a histone octamer containing two molecules each of H2A, H2B, H3 and H4 assembled in one H3-H4 heterotetramer and two H2A-H2B heterodimers. The octamer wraps approximately 147 bp of DNA. In terms of processing, phosphorylated to form H3S10ph. H3S10ph promotes subsequent H3K14ac formation and is required for transcriptional activation through TBP recruitment to the promoters. Mono-, di- and trimethylated by the COMPASS complex to form H3K4me1/2/3. H3K4me activates gene expression by regulating transcription elongation and plays a role in telomere length maintenance. H3K4me enrichment correlates with transcription levels, and occurs in a 5' to 3' gradient with H3K4me3 enrichment at the 5'-end of genes, shifting to H3K4me2 and then H3K4me1. Methylated by SET2 to form H3K36me. H3K36me represses gene expression. Methylated by DOT1 to form H3K79me. H3K79me is required for association of SIR proteins with telomeric regions and for telomeric silencing. The COMPASS-mediated formation of H3K4me2/3 and the DOT1-mediated formation of H3K79me require H2BK123ub1. Post-translationally, acetylation of histone H3 leads to transcriptional activation. H3K14ac formation by GCN5 is promoted by H3S10ph. H3K14ac can also be formed by ESA1. H3K56ac formation occurs predominantly in newly synthesized H3 molecules during G1, S and G2/M of the cell cycle and may be involved in DNA repair.

Its subcellular location is the nucleus. The protein localises to the chromosome. Functionally, core component of nucleosome. Nucleosomes wrap and compact DNA into chromatin, limiting DNA accessibility to the cellular machineries which require DNA as a template. Histones thereby play a central role in transcription regulation, DNA repair, DNA replication and chromosomal stability. DNA accessibility is regulated via a complex set of post-translational modifications of histones, also called histone code, and nucleosome remodeling. The chain is Histone H3.1/H3.2 (HHT1) from Lodderomyces elongisporus (strain ATCC 11503 / CBS 2605 / JCM 1781 / NBRC 1676 / NRRL YB-4239) (Yeast).